A 323-amino-acid polypeptide reads, in one-letter code: tRNA U34 carboxymethyltransferase (323 aa).

Residues Lys-91, Trp-105, Lys-110, Gly-130, 152-154, 181-182, Met-196, Tyr-200, and Arg-315 each bind carboxy-S-adenosyl-L-methionine; these read DPT and IE.

The protein belongs to the class I-like SAM-binding methyltransferase superfamily. CmoB family. Homotetramer.

The enzyme catalyses carboxy-S-adenosyl-L-methionine + 5-hydroxyuridine(34) in tRNA = 5-carboxymethoxyuridine(34) in tRNA + S-adenosyl-L-homocysteine + H(+). In terms of biological role, catalyzes carboxymethyl transfer from carboxy-S-adenosyl-L-methionine (Cx-SAM) to 5-hydroxyuridine (ho5U) to form 5-carboxymethoxyuridine (cmo5U) at position 34 in tRNAs. The polypeptide is tRNA U34 carboxymethyltransferase (Escherichia coli O157:H7).